The chain runs to 690 residues: ATP-dependent DNA helicase Hel308 (690 aa).

ATP-binding positions include Q26 and 45-52 (IPTASGKT). The Helicase ATP-binding domain occupies 32–188 (AGYLESEDNY…WLDARVVEHD (157 aa)). The short motif at 133-136 (DEFH) is the DEAH box element. The 210-residue stretch at 208 to 417 (EKNDVVLKVL…NRDALYRQII (210 aa)) folds into the Helicase C-terminal domain.

It belongs to the helicase family. Hel308 subfamily. In terms of assembly, monomer. Binds replication protein A (RPA), in presence and absence of DNA.

The enzyme catalyses Couples ATP hydrolysis with the unwinding of duplex DNA by translocating in the 3'-5' direction.. It carries out the reaction ATP + H2O = ADP + phosphate + H(+). In terms of biological role, DNA-dependent ATPase and 3'-5' DNA helicase that may be involved in repair of stalled replication forks. Helicase with 3'-to 5'- polarity; able to unwind over 100 bp of DNA at 50 degrees Celsius. Unwinds forked DNA, preferentially on lagging strand forks; has weaker activity on Holliday junctions. Displaces the invading strand in DNA D-loops. Unwinds short oligonucleotides from dsDNA with 3'- but not blunt ends or 5'-ssDNA tails in an ATP-dependent manner. ATPase activity is stimulated by ssDNA but not dsDNA, protein binds ssDNA, dsDNA with 5'- or 3'-overhangs but not blunt ended dsDNA and replication forks. Replication forks bind both this protein and RPA. RPA does not stimulate the helicase activity of this protein. The polypeptide is ATP-dependent DNA helicase Hel308 (Methanothermobacter thermautotrophicus (strain ATCC 29096 / DSM 1053 / JCM 10044 / NBRC 100330 / Delta H) (Methanobacterium thermoautotrophicum)).